We begin with the raw amino-acid sequence, 186 residues long: Elongation factor P (186 aa).

Belongs to the elongation factor P family.

It localises to the cytoplasm. Its pathway is protein biosynthesis; polypeptide chain elongation. Its function is as follows. Involved in peptide bond synthesis. Stimulates efficient translation and peptide-bond synthesis on native or reconstituted 70S ribosomes in vitro. Probably functions indirectly by altering the affinity of the ribosome for aminoacyl-tRNA, thus increasing their reactivity as acceptors for peptidyl transferase. The sequence is that of Elongation factor P from Prochlorococcus marinus (strain MIT 9301).